A 267-amino-acid chain; its full sequence is D-aminoacyl-tRNA deacylase (267 aa).

The protein belongs to the DtdA deacylase family. As to quaternary structure, monomer. Zn(2+) serves as cofactor.

It catalyses the reaction a D-aminoacyl-tRNA + H2O = a tRNA + a D-alpha-amino acid + H(+). The catalysed reaction is glycyl-tRNA(Ala) + H2O = tRNA(Ala) + glycine + H(+). Functionally, D-aminoacyl-tRNA deacylase with broad substrate specificity. By recycling D-aminoacyl-tRNA to D-amino acids and free tRNA molecules, this enzyme counteracts the toxicity associated with the formation of D-aminoacyl-tRNA entities in vivo. The polypeptide is D-aminoacyl-tRNA deacylase (Methanothrix thermoacetophila (strain DSM 6194 / JCM 14653 / NBRC 101360 / PT) (Methanosaeta thermophila)).